Here is a 450-residue protein sequence, read N- to C-terminus: FAD-dependent monooxygenase okaB (450 aa).

The helical transmembrane segment at 14–34 (IVIIIVGLGIAGLSAAIECHG) threads the bilayer. FAD is bound by residues E43 and R116. Residue R194 is part of the active site. Positions 318 and 331 each coordinate FAD.

It belongs to the paxM FAD-dependent monooxygenase family.

Its subcellular location is the membrane. The enzyme catalyses cyclo(N(8)-(alpha,alpha-dimethylallyl)-L-Trp-6a-(alpha,alpha-dimethylallyl)-L-Trp) + AH2 + O2 = okaramine C + A + H2O. The protein operates within alkaloid biosynthesis. In terms of biological role, FAD-dependent monooxygenase; part of the gene cluster that mediates the biosynthesis of okaramine B, a prenylated indole alkaloid that possesses an unusual octacyclic ring system, including a four-membered azetidine ring and an eight-membered azocine ring, and that exhibits insecticidal activity against silkworm larvae. Within the pathway, okaC performs indole 2,3-epoxidation, facilitating the formation of the hexahydropyrrolo[2,3-b]indole (HPI) moiety of okaramine C. okaC then performs asymmetric reverse prenylation of cyclo(L-Trp-L-Trp) at N-1 and C-2' of the indole ring to produce the cyclic prenylated tryptophan dimer cyclo(N8-(alpha,alpha-dimethylallyl)-L-Trp-6a-(alpha,alpha-dime-thylallyl)-L-Trp). The biosynthesis begins with the NRPS okaA that condenses two tryptophan molecules into cyclo(L-Trp-L-Trp). Prenylation by the prenyltransferase okaC then leads to the formation of cyclo(N8-(alpha,alpha-dimethylallyl)-L-Trp-6a-(alpha,alpha-dime-thylallyl)-L-Trp). This is followed by indole 2,3-epoxidation by the FAD-dependent monooxygenase okaB to facilitate the formation of the hexahydropyrrolo[2,3-b]indole (HPI) moiety of okaramine C. The cytochrome P450 monooxygenase okaD then likely catalyzes formation of the eight-membered ring of okaramine A. The dioxygenase okaE further forms the unusual 2-dimethyl-3-methyl-azetidine ring to yield 12-deshydroxyl okaramine E, as well as the hydroxylation of 12-deshydroxyl okaramine E to produce okaramine E. The cytochrome P450 monoxygenase okaG converts 12-deshydroxyl okaramine E into 3-desmethyl okaramine B which is further methylated by the methyltransferase okaF into okaramine B. In a shunt pathway, okaG and okaF together are also able to convert okaramine E into okaramine D. Okaramine H is produced by nonenzymatic conversion from okaramine A. The sequence is that of FAD-dependent monooxygenase okaB from Penicillium ochrochloron.